The primary structure comprises 477 residues: Actin-related protein 7 (477 aa).

The protein belongs to the actin family. In terms of assembly, forms a heterodimer with ARP9. Interacts with NPL6. Component of the two forms of the RSC complex composed of at least either RSC1 or RSC2, and ARP7, ARP9, LDB7, NPL6, RSC3, RSC30, RSC4, RSC58, RSC6, RSC8, RSC9, SFH1, STH1, HTL1 and probably RTT102. The complexes interact with histone and histone variant components of centromeric chromatin. Component of the SWI/SNF global transcription activator complex. The 1.14 MDa SWI/SNF complex is composed of 11 different subunits: one copy each of SWI1, SNF2/SWI2, SNF5, SNF12/SWP73, ARP7/SWP61, ARP9/SWP59; two copies each of SWI3, SNF6, SNF11, SWP82; and three copies of TAF14/SWP29.

The protein localises to the nucleus. Component of the chromatin structure remodeling complex (RSC), which is involved in transcription regulation and nucleosome positioning. RSC is responsible for the transfer of a histone octamer from a nucleosome core particle to naked DNA. The reaction requires ATP and involves an activated RSC-nucleosome intermediate. Remodeling reaction also involves DNA translocation, DNA twist and conformational change. As a reconfigurer of centromeric and flanking nucleosomes, RSC complex is required both for proper kinetochore function in chromosome segregation and, via a PKC1-dependent signaling pathway, for organization of the cellular cytoskeleton. This subunit is involved in transcriptional regulation. Heterodimer of ARP7 and ARP9 functions with HMG box proteins to facilitate proper chromatin architecture. Heterodimer formation is necessary for assembly into RSC complex. Part of the SWI/SNF complex, an ATP-dependent chromatin remodeling complex, is required for the positive and negative regulation of gene expression of a large number of genes. It changes chromatin structure by altering DNA-histone contacts within a nucleosome, leading eventually to a change in nucleosome position, thus facilitating or repressing binding of gene-specific transcription factors. The sequence is that of Actin-related protein 7 (ARP7) from Saccharomyces cerevisiae (strain ATCC 204508 / S288c) (Baker's yeast).